A 181-amino-acid chain; its full sequence is Oligoribonuclease (181 aa).

Residues 8 to 171 (LIWVDLEMTG…DDIRESIAEL (164 aa)) form the Exonuclease domain. Residue Tyr-129 is part of the active site.

This sequence belongs to the oligoribonuclease family.

The protein localises to the cytoplasm. In terms of biological role, 3'-to-5' exoribonuclease specific for small oligoribonucleotides. The chain is Oligoribonuclease from Aliivibrio fischeri (strain ATCC 700601 / ES114) (Vibrio fischeri).